A 199-amino-acid chain; its full sequence is Dephospho-CoA kinase (199 aa).

The DPCK domain occupies Val4 to Ser199. Ala12–Thr17 provides a ligand contact to ATP.

Belongs to the CoaE family.

The protein resides in the cytoplasm. It catalyses the reaction 3'-dephospho-CoA + ATP = ADP + CoA + H(+). The protein operates within cofactor biosynthesis; coenzyme A biosynthesis; CoA from (R)-pantothenate: step 5/5. Its function is as follows. Catalyzes the phosphorylation of the 3'-hydroxyl group of dephosphocoenzyme A to form coenzyme A. The polypeptide is Dephospho-CoA kinase (Oceanobacillus iheyensis (strain DSM 14371 / CIP 107618 / JCM 11309 / KCTC 3954 / HTE831)).